Reading from the N-terminus, the 1210-residue chain is ATP-dependent helicase/nuclease subunit A (1210 aa).

The 457-residue stretch at 27–483 (QKRTAQQIEA…ILLKENFRSQ (457 aa)) folds into the UvrD-like helicase ATP-binding domain. 48–55 (ASAGSGKT) contributes to the ATP binding site. The UvrD-like helicase C-terminal domain occupies 512–798 (QLIAGSHAQT…NLMTIHKSKG (287 aa)).

The protein belongs to the helicase family. AddA subfamily. In terms of assembly, heterodimer of AddA and AddB/RexB. Mg(2+) is required as a cofactor.

The catalysed reaction is Couples ATP hydrolysis with the unwinding of duplex DNA by translocating in the 3'-5' direction.. The enzyme catalyses ATP + H2O = ADP + phosphate + H(+). In terms of biological role, the heterodimer acts as both an ATP-dependent DNA helicase and an ATP-dependent, dual-direction single-stranded exonuclease. Recognizes the chi site generating a DNA molecule suitable for the initiation of homologous recombination. The AddA nuclease domain is required for chi fragment generation; this subunit has the helicase and 3' -&gt; 5' nuclease activities. This chain is ATP-dependent helicase/nuclease subunit A, found in Streptococcus pyogenes serotype M5 (strain Manfredo).